The following is a 543-amino-acid chain: Chaperonin GroEL (543 aa).

ATP contacts are provided by residues 30-33 (TLGP), K51, 87-91 (DGTTT), G415, and D496.

Belongs to the chaperonin (HSP60) family. Forms a cylinder of 14 subunits composed of two heptameric rings stacked back-to-back. Interacts with the co-chaperonin GroES.

It localises to the cytoplasm. It catalyses the reaction ATP + H2O + a folded polypeptide = ADP + phosphate + an unfolded polypeptide.. Functionally, together with its co-chaperonin GroES, plays an essential role in assisting protein folding. The GroEL-GroES system forms a nano-cage that allows encapsulation of the non-native substrate proteins and provides a physical environment optimized to promote and accelerate protein folding. The sequence is that of Chaperonin GroEL from Gluconobacter oxydans (strain 621H) (Gluconobacter suboxydans).